The chain runs to 148 residues: Small ribosomal subunit protein uS15 (148 aa).

This sequence belongs to the universal ribosomal protein uS15 family.

The sequence is that of Small ribosomal subunit protein uS15 (RPS13) from Encephalitozoon cuniculi (strain GB-M1) (Microsporidian parasite).